The sequence spans 317 residues: Transaldolase (317 aa).

Residue lysine 132 is the Schiff-base intermediate with substrate of the active site.

This sequence belongs to the transaldolase family. Type 1 subfamily. As to quaternary structure, homodimer.

The protein resides in the cytoplasm. It carries out the reaction D-sedoheptulose 7-phosphate + D-glyceraldehyde 3-phosphate = D-erythrose 4-phosphate + beta-D-fructose 6-phosphate. The protein operates within carbohydrate degradation; pentose phosphate pathway; D-glyceraldehyde 3-phosphate and beta-D-fructose 6-phosphate from D-ribose 5-phosphate and D-xylulose 5-phosphate (non-oxidative stage): step 2/3. Its function is as follows. Transaldolase is important for the balance of metabolites in the pentose-phosphate pathway. This chain is Transaldolase, found in Pseudoalteromonas atlantica (strain T6c / ATCC BAA-1087).